Reading from the N-terminus, the 99-residue chain is PE family protein PE13 (99 aa).

The PE domain maps to M1 to A93.

The protein belongs to the mycobacterial PE family.

It is found in the secreted. The protein resides in the cell wall. May play a pivotal role in the interaction between M.tuberculosis and host. Can enhance the survival within macrophages under stress conditions such as H(2)O(2), SDS and low pH. Increases the production of IL-6 and IL-1beta from macrophages, and decreases the secretion of suppressor of cytokine signaling 3 (SOCS-3). These changes probably involve the p38-ERK-NF-kappa-B signaling pathway. Also precipitates the macrophage death. This chain is PE family protein PE13, found in Mycobacterium tuberculosis (strain ATCC 25618 / H37Rv).